Reading from the N-terminus, the 604-residue chain is ATP-dependent RNA helicase DED1 (604 aa).

Residues Met1–Asn19 show a composition bias toward polar residues. A disordered region spans residues Met1–Ser55. Ala2 carries the post-translational modification N-acetylalanine. The span at Arg34–Gly45 shows a compositional bias: low complexity. Residues Gly46–Ser55 are compositionally biased toward gly residues. Arg51 carries the post-translational modification Omega-N-methylarginine. Dimethylated arginine; alternate is present on Arg62. Arg62 carries the post-translational modification Omega-N-methylarginine; alternate. The span at Asn67–Gly76 shows a compositional bias: gly residues. The disordered stretch occupies residues Asn67 to Val94. The short motif at Thr142–Lys170 is the Q motif element. Lys158 participates in a covalent cross-link: Glycyl lysine isopeptide (Lys-Gly) (interchain with G-Cter in ubiquitin). In terms of domain architecture, Helicase ATP-binding spans Val173–Leu362. Ala186 to Thr193 serves as a coordination point for ATP. Residues Ser215, Ser218, and Ser263 each carry the phosphoserine modification. The DEAD box signature appears at Asp306–Asp309. The region spanning Asn373–Met533 is the Helicase C-terminal domain. The tract at residues Met533 to Trp604 is disordered. Phosphoserine occurs at positions 535, 539, and 543. Arg545 bears the Dimethylated arginine; alternate mark. The residue at position 545 (Arg545) is an Omega-N-methylarginine; alternate. Phosphoserine is present on residues Ser572 and Ser576. Arg578 is subject to Omega-N-methylarginine. The segment covering Gly584–Trp604 has biased composition (low complexity). The residue at position 598 (Ser598) is a Phosphoserine.

It belongs to the DEAD box helicase family. DDX3/DED1 subfamily. In terms of assembly, interacts with the L-A virus GAG protein and the whole L-A virus particles.

It localises to the cytoplasm. It carries out the reaction ATP + H2O = ADP + phosphate + H(+). ATP-binding RNA helicase involved in translation initiation. Remodels RNA in response to ADP and ATP concentrations by facilitating disruption, but also formation of RNA duplexes. Has weak ATP-dependent affinity for dsRNA, but strong ATP-dependent affinity for ssRNA. Acts as a virus host factor involved in the replication of the MBV and the L-A viruses by promoting the negative-strand RNA synthesis. May be involved in recognition of the preinitiation complex and DNA binding of the RNA polymerase III and play a role in mRNA splicing. The chain is ATP-dependent RNA helicase DED1 from Saccharomyces cerevisiae (strain ATCC 204508 / S288c) (Baker's yeast).